A 390-amino-acid polypeptide reads, in one-letter code: MKFVDEAAILVVAGDGGNGCVSFRREKYIPNGGPDGGDGGDGGDVYLLADENLNTLIDYRFEKSFRAERGQNGQSRDCTGKRGKDITIKVPVGTRVQDQGTGEILGDMTRHEQRLMVAKGGWHGLGNTRFKSSVNRAPRQKTLGTAGEARDILLELLLLADVGMLGLPNAGKSTFIRAVSAAKPKVADYPFTTLVPSLGVVRMDHEQSFVVADIPGLIEGASDGAGLGIRFLKHLERCRVLLHLVDIAPIDESDPVENAKVIINELNQYSENLSQKPRWLVFNKIDVIGEEEAAERAKAIAEGMGWEGKYYMISAVNREGVNALCWDVMKFINTQPKAMAIEESAPEKVEFMWDDYHREQIAEVEAEADDDWDDDWDEEDDEGVEIIYQK.

The region spanning 1–159 (MKFVDEAAIL…RDILLELLLL (159 aa)) is the Obg domain. Positions 160 to 333 (ADVGMLGLPN…LCWDVMKFIN (174 aa)) constitute an OBG-type G domain. GTP-binding positions include 166–173 (GLPNAGKS), 191–195 (FTTLV), 213–216 (DIPG), 283–286 (NKID), and 314–316 (SAV). 2 residues coordinate Mg(2+): S173 and T193. A compositionally biased stretch (acidic residues) spans 366-384 (AEADDDWDDDWDEEDDEGV). A disordered region spans residues 366 to 390 (AEADDDWDDDWDEEDDEGVEIIYQK).

Belongs to the TRAFAC class OBG-HflX-like GTPase superfamily. OBG GTPase family. Monomer. Mg(2+) serves as cofactor.

It is found in the cytoplasm. In terms of biological role, an essential GTPase which binds GTP, GDP and possibly (p)ppGpp with moderate affinity, with high nucleotide exchange rates and a fairly low GTP hydrolysis rate. Plays a role in control of the cell cycle, stress response, ribosome biogenesis and in those bacteria that undergo differentiation, in morphogenesis control. The polypeptide is GTPase Obg (Serratia proteamaculans (strain 568)).